The following is a 142-amino-acid chain: MLEEKKKQESFEIQRIYIKDVSFEAPNTPNIFHVNWIPTIKLNLNTTTKKIKENIFEVVLMVKVTVKIKEDLVFLCDIDQAGIFFIANINEKRLKHCLYSYCPNILFPYARTCISNLVSCGSFPQMNLAPINFDALYHDHIK.

The protein belongs to the SecB family. In terms of assembly, homotetramer, a dimer of dimers. One homotetramer interacts with 1 SecA dimer.

The protein localises to the cytoplasm. Functionally, one of the proteins required for the normal export of preproteins out of the cell cytoplasm. It is a molecular chaperone that binds to a subset of precursor proteins, maintaining them in a translocation-competent state. It also specifically binds to its receptor SecA. This Buchnera aphidicola subsp. Acyrthosiphon pisum (strain 5A) protein is Protein-export protein SecB.